The primary structure comprises 356 residues: Phosphoserine aminotransferase (356 aa).

Arginine 41 is an L-glutamate binding site. Pyridoxal 5'-phosphate-binding positions include alanine 75–serine 76, tryptophan 99, threonine 147, aspartate 166, and glutamine 189. Position 190 is an N6-(pyridoxal phosphate)lysine (lysine 190). Asparagine 231–threonine 232 lines the pyridoxal 5'-phosphate pocket.

The protein belongs to the class-V pyridoxal-phosphate-dependent aminotransferase family. SerC subfamily. As to quaternary structure, homodimer. Pyridoxal 5'-phosphate is required as a cofactor.

Its subcellular location is the cytoplasm. The catalysed reaction is O-phospho-L-serine + 2-oxoglutarate = 3-phosphooxypyruvate + L-glutamate. The enzyme catalyses 4-(phosphooxy)-L-threonine + 2-oxoglutarate = (R)-3-hydroxy-2-oxo-4-phosphooxybutanoate + L-glutamate. It functions in the pathway amino-acid biosynthesis; L-serine biosynthesis; L-serine from 3-phospho-D-glycerate: step 2/3. It participates in cofactor biosynthesis; pyridoxine 5'-phosphate biosynthesis; pyridoxine 5'-phosphate from D-erythrose 4-phosphate: step 3/5. Its function is as follows. Catalyzes the reversible conversion of 3-phosphohydroxypyruvate to phosphoserine and of 3-hydroxy-2-oxo-4-phosphonooxybutanoate to phosphohydroxythreonine. In Phocaeicola vulgatus (strain ATCC 8482 / DSM 1447 / JCM 5826 / CCUG 4940 / NBRC 14291 / NCTC 11154) (Bacteroides vulgatus), this protein is Phosphoserine aminotransferase.